Reading from the N-terminus, the 148-residue chain is Large ribosomal subunit protein bL9 (148 aa).

The protein belongs to the bacterial ribosomal protein bL9 family.

Functionally, binds to the 23S rRNA. The sequence is that of Large ribosomal subunit protein bL9 from Oceanobacillus iheyensis (strain DSM 14371 / CIP 107618 / JCM 11309 / KCTC 3954 / HTE831).